Consider the following 384-residue polypeptide: Probable tRNA sulfurtransferase (384 aa).

The region spanning 57 to 160 (EEVVDRVRNV…KKTYIYSKRI (104 aa)) is the THUMP domain. ATP is bound by residues 177-178 (ML), 202-203 (YF), Arg259, Gly281, and Gln290.

This sequence belongs to the ThiI family.

It is found in the cytoplasm. The catalysed reaction is [ThiI sulfur-carrier protein]-S-sulfanyl-L-cysteine + a uridine in tRNA + 2 reduced [2Fe-2S]-[ferredoxin] + ATP + H(+) = [ThiI sulfur-carrier protein]-L-cysteine + a 4-thiouridine in tRNA + 2 oxidized [2Fe-2S]-[ferredoxin] + AMP + diphosphate. It catalyses the reaction [ThiS sulfur-carrier protein]-C-terminal Gly-Gly-AMP + S-sulfanyl-L-cysteinyl-[cysteine desulfurase] + AH2 = [ThiS sulfur-carrier protein]-C-terminal-Gly-aminoethanethioate + L-cysteinyl-[cysteine desulfurase] + A + AMP + 2 H(+). It functions in the pathway cofactor biosynthesis; thiamine diphosphate biosynthesis. Catalyzes the ATP-dependent transfer of a sulfur to tRNA to produce 4-thiouridine in position 8 of tRNAs, which functions as a near-UV photosensor. Also catalyzes the transfer of sulfur to the sulfur carrier protein ThiS, forming ThiS-thiocarboxylate. This is a step in the synthesis of thiazole, in the thiamine biosynthesis pathway. The sulfur is donated as persulfide by IscS. In Clostridium acetobutylicum (strain ATCC 824 / DSM 792 / JCM 1419 / IAM 19013 / LMG 5710 / NBRC 13948 / NRRL B-527 / VKM B-1787 / 2291 / W), this protein is Probable tRNA sulfurtransferase.